The following is a 544-amino-acid chain: High affinity immunoglobulin alpha and immunoglobulin mu Fc receptor (544 aa).

An N-terminal signal peptide occupies residues Met1–Ala16. At Leu17 to Arg462 the chain is on the extracellular side. The Ig-like V-type domain occupies Pro61–Thr169. The mediates immunoglobulin Fc fragment-binding stretch occupies residues Gly75 to Trp97. Residues Cys82 and Cys153 are joined by a disulfide bond. Residue Asn167 is glycosylated (N-linked (GlcNAc...) asparagine). The segment at Asp218–Asp325 is disordered. Composition is skewed to polar residues over residues Val220 to Ser232 and Ala280 to Glu291. Over residues Ala307 to Asp325 the composition is skewed to basic and acidic residues. The chain crosses the membrane as a helical span at residues Thr463–Gln483. Residues Arg484–Pro544 are Cytoplasmic-facing. A disordered region spans residues Pro511 to Pro544.

As to quaternary structure, interacts with IGHM; this interaction facilitates the endocytosis of IgM-coated microbes or IgM-antigen immune complexes. Post-translationally, N-glycosylated.

The protein resides in the cell membrane. In terms of biological role, functions as a receptor for the Fc fragment of IgA and IgM. Binds IgA and IgM with high affinity and mediates their endocytosis. May function in the immune response to microbes mediated by IgA and IgM. The sequence is that of High affinity immunoglobulin alpha and immunoglobulin mu Fc receptor (FCAMR) from Pongo abelii (Sumatran orangutan).